Here is a 233-residue protein sequence, read N- to C-terminus: Putative N-acetylmuramoyl-L-alanine amidase (233 aa).

A MurNAc-LAA domain is found at 1–219 (MIDPGHGGQD…IANAIYIALK (219 aa)).

Belongs to the N-acetylmuramoyl-L-alanine amidase 3 family.

It is found in the secreted. It catalyses the reaction Hydrolyzes the link between N-acetylmuramoyl residues and L-amino acid residues in certain cell-wall glycopeptides.. Functionally, cell-wall hydrolase involved in septum cleavage during cell division. The chain is Putative N-acetylmuramoyl-L-alanine amidase (amiB) from Buchnera aphidicola subsp. Schizaphis graminum (strain Sg).